Reading from the N-terminus, the 353-residue chain is Protein RecA (353 aa).

ATP is bound at residue 67–74; the sequence is GPESSGKT.

This sequence belongs to the RecA family.

Its subcellular location is the cytoplasm. Can catalyze the hydrolysis of ATP in the presence of single-stranded DNA, the ATP-dependent uptake of single-stranded DNA by duplex DNA, and the ATP-dependent hybridization of homologous single-stranded DNAs. It interacts with LexA causing its activation and leading to its autocatalytic cleavage. The protein is Protein RecA of Salmonella paratyphi A (strain ATCC 9150 / SARB42).